Reading from the N-terminus, the 401-residue chain is Transcription factor atf-2 (401 aa).

A compositionally biased stretch (low complexity) spans 19-38 (SASAEFSSSSSDSSNFSEGS). Residues 19-78 (SASAEFSSSSSDSSNFSEGSPPESRRNSVNESVIKDEHYWERRRRNNDASRRSREKRRQN) form a disordered region. Residues 41–78 (ESRRNSVNESVIKDEHYWERRRRNNDASRRSREKRRQN) are compositionally biased toward basic and acidic residues. The bZIP 1 domain maps to 54–100 (DEHYWERRRRNNDASRRSREKRRQNDLAMEEKIMLLSAENERLKSQL). Positions 60-85 (RRRRNNDASRRSREKRRQNDLAMEEK) are basic motif 1. Residues 89–96 (LSAENERL) are leucine-zipper 1. Positions 181–211 (SASSLFSSSSSSAFHPFRPSESAQQSFPSSS) are enriched in low complexity. Disordered stretches follow at residues 181–256 (SASS…PQPV) and 273–345 (QRRP…AAKR). 2 stretches are compositionally biased toward polar residues: residues 222–256 (DSST…PQPV) and 273–283 (QRRPSPTVPQS). Residues 305–317 (ESVSSSASFSPSH) are compositionally biased toward low complexity. The bZIP 2 domain occupies 329–392 (SPQYVDRRRR…AHFKSVLAQR (64 aa)). The tract at residues 335-360 (RRRRNNEAAKRCRANRRAVFEYRSRR) is basic motif 2. Positions 361 to 388 (VQLLEGENEDLRTQIETLKAEIAHFKSV) form a coiled coil. Residues 364–378 (LEGENEDLRTQIETL) are leucine-zipper 2.

Belongs to the bZIP family. As to quaternary structure, interacts with cell death specification protein ces-2. Post-translationally, phosphorylated by mitogen-activated protein kinases pmk-2 and pmk-3. May be responsive to osmotic stress.

The protein resides in the nucleus. Its function is as follows. Acts as a transcription factor that recognizes and binds to the sequence 5'-[GA]TTA[CT]GTAA[CT]-3', a sequence present in many promoters. Involved in the development of the excretory duct cell, by positively modulating embryonic transcription of putative transcription factor lin-48, acting in concert with cell death specification protein ces-2. Negatively modulates expression of key autophagy-related genes, bec-1/ATG6 and lgg-1/ATG8, and may link together autophagy and apoptosis during development. Positively modulates expression of neuropeptide pigment dispersing factor homologs pdf-1 and pdf-2. This Caenorhabditis elegans protein is Transcription factor atf-2.